Consider the following 252-residue polypeptide: Cell division protein ZapD (252 aa).

It belongs to the ZapD family. As to quaternary structure, interacts with FtsZ.

The protein localises to the cytoplasm. In terms of biological role, cell division factor that enhances FtsZ-ring assembly. Directly interacts with FtsZ and promotes bundling of FtsZ protofilaments, with a reduction in FtsZ GTPase activity. In Cupriavidus necator (strain ATCC 17699 / DSM 428 / KCTC 22496 / NCIMB 10442 / H16 / Stanier 337) (Ralstonia eutropha), this protein is Cell division protein ZapD.